A 196-amino-acid chain; its full sequence is Elongation factor Ts (196 aa).

The interval 80–83 is involved in Mg(2+) ion dislocation from EF-Tu; that stretch reads TDFV.

This sequence belongs to the EF-Ts family.

The protein localises to the cytoplasm. In terms of biological role, associates with the EF-Tu.GDP complex and induces the exchange of GDP to GTP. It remains bound to the aminoacyl-tRNA.EF-Tu.GTP complex up to the GTP hydrolysis stage on the ribosome. This chain is Elongation factor Ts, found in Thermus thermophilus (strain ATCC BAA-163 / DSM 7039 / HB27).